Here is a 266-residue protein sequence, read N- to C-terminus: MRGAFYTAIALLIGRSQTAKEIDQTDVSKPYLNVVAIGGKGTKTTPKRYLRDGLAHSATNEERVKANVLSKDAMDLAAEGKDWLSLRLGTVDHSHTPQLKRKVDRLPAITQRRIEKKLTTAKQRVYDRQVKLDDPRYPEYLEMHHNFLDIPKMPPGMSLAEAVVMYNMVNWQSGSIPTGKKATNHLSHLAGRSPLRDVNKALDPTFVAKASEDQLRNAYFVKLQIMYAKVYDFCHSNGCTKKELVSPLEQKVEAKETKLLLPLFKN.

A signal peptide spans 1-18; it reads MRGAFYTAIALLIGRSQT. The short motif at 48 to 63 is the RxLR-dEER element; that stretch reads RYLRDGLAHSATNEER.

Belongs to the RxLR effector family.

It is found in the secreted. It localises to the host nucleus. In terms of biological role, secreted effector that dos not suppress the host cell death induced by cell death-inducing proteins. The polypeptide is Secreted RxLR effector protein 128 (Plasmopara viticola (Downy mildew of grapevine)).